Reading from the N-terminus, the 387-residue chain is MAQEGQNIDEPVVIGEEKGSVRLTTLNRPRQLNVISPEVVFKLAEYLELWEKDDQTKLILIKGTGRAFSAGGDLKVFYHGQESKDSCLEVVYRMYWLCYHIHTYKKTQVSLVNGISMGGGAALMVPMKFSVVTEKTVFATPEASFGFHTDCGFSYIHSRLPGHLGEFLALTGARLNGKELVAIGMATHFVPSGKLMDLEARLVSLDSGDADVVQSTIEEFSEKVNLDKDSILNKQSVINECFSKESVKQIIQAFEAEASKDGNEWITPVIKGLKRSSPTGLKIVLQSIREGRKQTLSDCLKKEFRLTLNILRKTISPDMYEGIRALTIDKDNSPKWNPATLDEVDDEKINSVFKLFEDDDIELQIPETEENRWGGKYETSGYASVRG.

Ala2 carries the post-translational modification N-acetylalanine.

The protein belongs to the enoyl-CoA hydratase/isomerase family.

In Arabidopsis thaliana (Mouse-ear cress), this protein is 3-hydroxyisobutyryl-CoA hydrolase-like protein 5.